The chain runs to 664 residues: Transketolase 1 (664 aa).

His-26 serves as a coordination point for substrate. Thiamine diphosphate is bound by residues His-66 and 114–116; that span reads GPL. Mg(2+) is bound at residue Asp-155. Thiamine diphosphate contacts are provided by Gly-156 and Asn-185. Positions 185 and 187 each coordinate Mg(2+). His-260, Arg-357, and Ser-384 together coordinate substrate. His-260 serves as a coordination point for thiamine diphosphate. Glu-411 acts as the Proton donor in catalysis. Residue Phe-437 coordinates thiamine diphosphate. Substrate contacts are provided by His-461, Asp-469, and Arg-520.

This sequence belongs to the transketolase family. Homodimer. Requires Mg(2+) as cofactor. Ca(2+) is required as a cofactor. It depends on Mn(2+) as a cofactor. The cofactor is Co(2+). Thiamine diphosphate serves as cofactor.

It carries out the reaction D-sedoheptulose 7-phosphate + D-glyceraldehyde 3-phosphate = aldehydo-D-ribose 5-phosphate + D-xylulose 5-phosphate. Functionally, catalyzes the transfer of a two-carbon ketol group from a ketose donor to an aldose acceptor, via a covalent intermediate with the cofactor thiamine pyrophosphate. The sequence is that of Transketolase 1 (tkt1) from Vibrio parahaemolyticus serotype O3:K6 (strain RIMD 2210633).